A 702-amino-acid chain; its full sequence is Polyribonucleotide nucleotidyltransferase (702 aa).

Mg(2+) contacts are provided by Asp-485 and Asp-491. One can recognise a KH domain in the interval Pro-552 to Ile-612. One can recognise an S1 motif domain in the interval Gly-622–Lys-690.

It belongs to the polyribonucleotide nucleotidyltransferase family. Mg(2+) serves as cofactor.

It is found in the cytoplasm. The catalysed reaction is RNA(n+1) + phosphate = RNA(n) + a ribonucleoside 5'-diphosphate. Functionally, involved in mRNA degradation. Catalyzes the phosphorolysis of single-stranded polyribonucleotides processively in the 3'- to 5'-direction. The polypeptide is Polyribonucleotide nucleotidyltransferase (Clostridium botulinum (strain 657 / Type Ba4)).